The following is a 153-amino-acid chain: Arachidonate 5-lipoxygenase-activating protein (153 aa).

Residues 1–8 (MDQETVGN) are Lumenal-facing. Residues 9–30 (VVLLAIVTLISVVQNGFFAHKV) traverse the membrane as a helical segment. Topologically, residues 31-52 (EHESRTQNGRSFQRTGTLAFER) are cytoplasmic. Residues 53–77 (VYTANQNCVDAYPTFLAVLWSAGLL) traverse the membrane as a helical segment. The Lumenal segment spans residues 78-80 (CSQ). A helical membrane pass occupies residues 81–102 (VPAAFAGLMYLLVRQKYFVGYL). Residues 103 to 107 (GERTQ) lie on the Cytoplasmic side of the membrane. Residues 108-115 (STPGYIFG) lie within the membrane without spanning it. Residues 116 to 128 (KRIILFLFLMSVA) traverse the membrane as a helical segment. At 129-153 (GIFNYYLIFFFGSDFENYIKTVTTT) the chain is on the lumenal side.

The protein belongs to the MAPEG family. In terms of assembly, homotrimer. Interacts with LTC4S and ALOX5.

The protein localises to the nucleus membrane. It is found in the endoplasmic reticulum membrane. Its function is as follows. Required for leukotriene biosynthesis by ALOX5 (5-lipoxygenase). Anchors ALOX5 to the membrane. Binds arachidonic acid, and could play an essential role in the transfer of arachidonic acid to ALOX5. Binds to MK-886, a compound that blocks the biosynthesis of leukotrienes. The sequence is that of Arachidonate 5-lipoxygenase-activating protein (ALOX5AP) from Macaca mulatta (Rhesus macaque).